We begin with the raw amino-acid sequence, 130 residues long: Small ribosomal subunit protein uS9 (130 aa).

A disordered region spans residues 108-130; the sequence is PRMKERRKYGLKKARRAPQFSKR. A compositionally biased stretch (basic residues) spans 111–130; it reads KERRKYGLKKARRAPQFSKR.

Belongs to the universal ribosomal protein uS9 family.

In Desulforamulus reducens (strain ATCC BAA-1160 / DSM 100696 / MI-1) (Desulfotomaculum reducens), this protein is Small ribosomal subunit protein uS9.